Reading from the N-terminus, the 513-residue chain is NADH-quinone oxidoreductase chain 13 (513 aa).

Helical transmembrane passes span 3–23 (NLLS…ALFL), 34–54 (AKWL…FVLF), 81–101 (VDGI…LTIL), 112–132 (EYMI…TALD), 133–153 (LVLF…IIGI), 164–184 (FKFF…MIAM), 211–231 (MTVV…SFAV), 250–270 (PTAG…YGFL), 277–297 (FPVA…IAIV), 312–332 (VIAY…FAAN), 340–360 (IFQM…VGVI), 383–403 (AAVF…SGFV), 418–438 (WVAL…LWLY), and 463–483 (WVFI…RLVT).

This sequence belongs to the complex I subunit 4 family. NDH-1 is composed of at least 14 different subunits, Nqo1 to Nqo14. The complex has a L-shaped structure, with the hydrophobic arm (subunits Nqo7, Nqo8, Nqo10 to Nqo14) embedded in the inner membrane and the hydrophilic peripheral arm (subunits Nqo1 to Nqo6, Nqo9) protruding into the bacterial cytoplasm. The hydrophilic domain contains all the redox centers.

Its subcellular location is the cell inner membrane. It carries out the reaction a quinone + NADH + 5 H(+)(in) = a quinol + NAD(+) + 4 H(+)(out). NDH-1 shuttles electrons from NADH, via FMN and iron-sulfur (Fe-S) centers, to quinones in the respiratory chain. The immediate electron acceptor for the enzyme in this species is believed to be ubiquinone. Couples the redox reaction to proton translocation (for every two electrons transferred, four hydrogen ions are translocated across the cytoplasmic membrane), and thus conserves the redox energy in a proton gradient. In Paracoccus denitrificans, this protein is NADH-quinone oxidoreductase chain 13.